The primary structure comprises 908 residues: Hyphal wall protein 2 (908 aa).

An N-terminal signal peptide occupies residues 1 to 20; it reads MRFATTQLATLACFILTAEA. 3 stretches are compositionally biased toward low complexity: residues 110–187, 266–324, and 332–405; these read PKTA…TTSK, ESTT…TMKH, and HATT…KSST. 2 disordered regions span residues 110–221 and 263–477; these read PKTA…PSKT and TETE…IPKY. Residues 406 to 416 are compositionally biased toward polar residues; it reads PASTLEYSTSI. Residues 422 to 477 show a composition bias toward low complexity; that stretch reads TTSNSLSTKSTTLTTISRSSTSGSSVPNTTRESSTSTTTPNSSSSESKVSSAIPKY. Residues Asn-449, Asn-462, and Asn-519 are each glycosylated (N-linked (GlcNAc...) asparagine). Positions 539–608 are enriched in low complexity; sequence GTTVRSSTSE…TSTTTPESSP (70 aa). The segment at 539 to 700 is disordered; that stretch reads GTTVRSSTSE…TSASETSSGS (162 aa). The span at 624–638 shows a compositional bias: polar residues; it reads TMESSASTTKNSSIQ. Asn-634 is a glycosylation site (N-linked (GlcNAc...) asparagine). Low complexity-rich tracts occupy residues 639-655 and 662-677; these read STSE…ESSV and SSVP…VVTT. An N-linked (GlcNAc...) asparagine glycan is attached at Asn-684. The span at 685-700 shows a compositional bias: low complexity; it reads TTLEHSTSASETSSGS. N-linked (GlcNAc...) asparagine glycosylation is present at Asn-764. Positions 821–844 are disordered; sequence VSTDVKPTTSSQGTKSTPVDTDSK. A lipid anchor (GPI-anchor amidated glycine) is attached at Gly-887. Residues 888–908 constitute a propeptide, removed in mature form; that stretch reads TGNNMKLSFGVVIAGVAAFAI.

The GPI-anchor is attached to the protein in the endoplasmic reticulum and serves to target the protein to the cell surface. There, the glucosamine-inositol phospholipid moiety is cleaved off and the GPI-modified mannoprotein is covalently attached via its lipidless GPI glycan remnant to the 1,6-beta-glucan of the outer cell wall layer.

It localises to the secreted. The protein resides in the cell wall. Its subcellular location is the membrane. Functionally, GPI-anchored cell wall protein required for mating efficiency, biofilm formation, adhesion, filamentous growth, and oxidative stress tolerance. Involved in normal disseminated infection in a mouse systemic candidiasis model. The chain is Hyphal wall protein 2 (HWP2) from Candida albicans (strain SC5314 / ATCC MYA-2876) (Yeast).